Here is a 544-residue protein sequence, read N- to C-terminus: Thermosome subunit (544 aa).

This sequence belongs to the TCP-1 chaperonin family. In terms of assembly, forms an oligomeric complex of eight-membered rings.

Molecular chaperone; binds unfolded polypeptides in vitro, and has a weak ATPase activity. The protein is Thermosome subunit (ths) of Methanothermococcus thermolithotrophicus (Methanococcus thermolithotrophicus).